Reading from the N-terminus, the 962-residue chain is Alpha-glucan phosphorylase 1 (962 aa).

The transit peptide at 1 to 63 (MDTMRISGVS…RSFLSVKSIS (63 aa)) directs the protein to the chloroplast. The disordered stretch occupies residues 525–552 (AKDAQNGVKTEQEEEKTAGEEEEDEVIP). The residue at position 808 (lysine 808) is an N6-(pyridoxal phosphate)lysine.

It belongs to the glycogen phosphorylase family. Pyridoxal 5'-phosphate serves as cofactor.

The protein resides in the plastid. It localises to the chloroplast stroma. It catalyses the reaction [(1-&gt;4)-alpha-D-glucosyl](n) + phosphate = [(1-&gt;4)-alpha-D-glucosyl](n-1) + alpha-D-glucose 1-phosphate. In terms of biological role, phosphorylase is an important allosteric enzyme in carbohydrate metabolism. Enzymes from different sources differ in their regulatory mechanisms and in their natural substrates. However, all known phosphorylases share catalytic and structural properties. May be not required for the degradation of starch, but the phosphorolysis of starch may play an important role in water stress tolerance. The polypeptide is Alpha-glucan phosphorylase 1 (PHS1) (Arabidopsis thaliana (Mouse-ear cress)).